The primary structure comprises 199 residues: Superoxide dismutase [Mn/Fe] (199 aa).

His27, His81, Asp161, and His165 together coordinate Fe(3+). His27, His81, Asp161, and His165 together coordinate Mn(2+).

Belongs to the iron/manganese superoxide dismutase family. Homodimer. Requires Mn(2+) as cofactor. Fe(3+) serves as cofactor.

It carries out the reaction 2 superoxide + 2 H(+) = H2O2 + O2. In terms of biological role, destroys superoxide anion radicals which are normally produced within the cells and which are toxic to biological systems. Catalyzes the dismutation of superoxide anion radicals into O2 and H2O2 by successive reduction and oxidation of the transition metal ion at the active site. This is Superoxide dismutase [Mn/Fe] (sodA) from Staphylococcus epidermidis.